The sequence spans 421 residues: Tryptophan synthase beta chain (421 aa).

Lys-110 carries the post-translational modification N6-(pyridoxal phosphate)lysine.

Belongs to the TrpB family. As to quaternary structure, tetramer of two alpha and two beta chains. The cofactor is pyridoxal 5'-phosphate.

It carries out the reaction (1S,2R)-1-C-(indol-3-yl)glycerol 3-phosphate + L-serine = D-glyceraldehyde 3-phosphate + L-tryptophan + H2O. It functions in the pathway amino-acid biosynthesis; L-tryptophan biosynthesis; L-tryptophan from chorismate: step 5/5. In terms of biological role, the beta subunit is responsible for the synthesis of L-tryptophan from indole and L-serine. This Mycobacterium intracellulare protein is Tryptophan synthase beta chain (trpB).